Here is a 207-residue protein sequence, read N- to C-terminus: Vascular endothelial growth factor B (207 aa).

A signal peptide spans 1–21 (MSPLLRRLLLAALLQLAPAQA). Disulfide bonds link C47–C89, C78–C122, and C82–C124. Residues 122 to 139 (CECRPKKKDSAVKPDRAA) show a composition bias toward basic and acidic residues. The segment at 122–207 (CECRPKKKDS…AASSVAKGGA (86 aa)) is disordered. Low complexity predominate over residues 174-207 (PSAHAAPSTTSALTPGPAAAAADAAASSVAKGGA).

Belongs to the PDGF/VEGF growth factor family. In terms of assembly, homodimer; disulfide-linked. Can also form heterodimer with VEGF. VEGF-B186 is O-glycosylated. Expressed in all tissues except liver. Highest levels found in heart, skeletal muscle and pancreas.

It localises to the secreted. Functionally, growth factor for endothelial cells. VEGF-B167 binds heparin and neuropilin-1 whereas the binding to neuropilin-1 of VEGF-B186 is regulated by proteolysis. The sequence is that of Vascular endothelial growth factor B (VEGFB) from Homo sapiens (Human).